A 79-amino-acid polypeptide reads, in one-letter code: MKMNVVVLSVVVLLLFIANIQQTEAGKPEKEVNFPAPGKKPTREDCKKACANKYTNGVMSKVIVAKLTGKNCYCKYQEN.

An N-terminal signal peptide occupies residues 1-25 (MKMNVVVLSVVVLLLFIANIQQTEA).

It belongs to the scoloptoxin-15 family. In terms of processing, contains 2 disulfide bonds. Expressed by the venom gland.

Its subcellular location is the secreted. In Scolopendra morsitans (Tanzanian blue ringleg centipede), this protein is U-scoloptoxin(15)-Sm1a.